Consider the following 134-residue polypeptide: Small ribosomal subunit protein uS8c (134 aa).

Belongs to the universal ribosomal protein uS8 family. In terms of assembly, part of the 30S ribosomal subunit.

The protein localises to the plastid. Its subcellular location is the chloroplast. One of the primary rRNA binding proteins, it binds directly to 16S rRNA central domain where it helps coordinate assembly of the platform of the 30S subunit. This is Small ribosomal subunit protein uS8c (rps8) from Draba nemorosa (Woodland whitlowgrass).